A 253-amino-acid polypeptide reads, in one-letter code: Cell division protein ZapD (253 aa).

It belongs to the ZapD family. Interacts with FtsZ.

The protein resides in the cytoplasm. Functionally, cell division factor that enhances FtsZ-ring assembly. Directly interacts with FtsZ and promotes bundling of FtsZ protofilaments, with a reduction in FtsZ GTPase activity. The protein is Cell division protein ZapD of Bordetella bronchiseptica (strain ATCC BAA-588 / NCTC 13252 / RB50) (Alcaligenes bronchisepticus).